Reading from the N-terminus, the 304-residue chain is ATP phosphoribosyltransferase (304 aa).

It belongs to the ATP phosphoribosyltransferase family. Long subfamily. Mg(2+) serves as cofactor.

The protein localises to the cytoplasm. It carries out the reaction 1-(5-phospho-beta-D-ribosyl)-ATP + diphosphate = 5-phospho-alpha-D-ribose 1-diphosphate + ATP. It functions in the pathway amino-acid biosynthesis; L-histidine biosynthesis; L-histidine from 5-phospho-alpha-D-ribose 1-diphosphate: step 1/9. Feedback inhibited by histidine. In terms of biological role, catalyzes the condensation of ATP and 5-phosphoribose 1-diphosphate to form N'-(5'-phosphoribosyl)-ATP (PR-ATP). Has a crucial role in the pathway because the rate of histidine biosynthesis seems to be controlled primarily by regulation of HisG enzymatic activity. The polypeptide is ATP phosphoribosyltransferase (Xanthomonas euvesicatoria pv. vesicatoria (strain 85-10) (Xanthomonas campestris pv. vesicatoria)).